The following is a 129-amino-acid chain: Small ribosomal subunit protein uS11c (129 aa).

It belongs to the universal ribosomal protein uS11 family. As to quaternary structure, part of the 30S ribosomal subunit.

Its subcellular location is the plastid. The protein resides in the chloroplast. The protein is Small ribosomal subunit protein uS11c of Pleurastrum terricola (Filamentous green alga).